The sequence spans 1375 residues: DNA-directed RNA polymerase subunit beta' (1375 aa).

C70, C72, C85, and C88 together coordinate Zn(2+). The Mg(2+) site is built by D461, D463, and D465. Zn(2+) contacts are provided by C797, C871, C878, and C881.

Belongs to the RNA polymerase beta' chain family. As to quaternary structure, the RNAP catalytic core consists of 2 alpha, 1 beta, 1 beta' and 1 omega subunit. When a sigma factor is associated with the core the holoenzyme is formed, which can initiate transcription. Mg(2+) serves as cofactor. Zn(2+) is required as a cofactor.

The catalysed reaction is RNA(n) + a ribonucleoside 5'-triphosphate = RNA(n+1) + diphosphate. Functionally, DNA-dependent RNA polymerase catalyzes the transcription of DNA into RNA using the four ribonucleoside triphosphates as substrates. This is DNA-directed RNA polymerase subunit beta' from Neorickettsia sennetsu (strain ATCC VR-367 / Miyayama) (Ehrlichia sennetsu).